The chain runs to 65 residues: MPKMKSNRAAAKRFKRTANGGFKSGNSFTSHRFHGKTKKQRRQLRGLSMMDKTNVKRYKKLLPFK.

The interval 1–52 (MPKMKSNRAAAKRFKRTANGGFKSGNSFTSHRFHGKTKKQRRQLRGLSMMDK) is disordered. Residues 31–44 (HRFHGKTKKQRRQL) show a composition bias toward basic residues.

Belongs to the bacterial ribosomal protein bL35 family.

The protein is Large ribosomal subunit protein bL35 of Limosilactobacillus reuteri (strain DSM 20016) (Lactobacillus reuteri).